Reading from the N-terminus, the 344-residue chain is MEVALYDYELPKEAIAQTPVEPRDASRLMVLERRTGAVDHRIFRDLVHILHPGDLLVVNRTRVIPARLFGKKRDSDVTVEIVLLTPMGDDRWEVLVRPGRRLKPGVFVDLGEGRLAAEIVETTDFGGRVVRFHYSGDFDTLIDEIGQMPLPPYIETALPRQEAERYQTVYSQERGSAAAPTAGLHFTPQLLEDLKKRGIEITSVLLHVGLGTFRPVQVDRIEEHKMHSEFFQVDPEAARAIAKAKQEGRRVIAVGTTVARTLETAAGLHNGTVAAGSGWTDIFIYPGYTFQCIDGLITNFHLPRSTLLMLVSAFAGREQVLAAYREALEKGYRFFSFGDAMLII.

This sequence belongs to the QueA family. As to quaternary structure, monomer.

It localises to the cytoplasm. The enzyme catalyses 7-aminomethyl-7-carbaguanosine(34) in tRNA + S-adenosyl-L-methionine = epoxyqueuosine(34) in tRNA + adenine + L-methionine + 2 H(+). It participates in tRNA modification; tRNA-queuosine biosynthesis. Functionally, transfers and isomerizes the ribose moiety from AdoMet to the 7-aminomethyl group of 7-deazaguanine (preQ1-tRNA) to give epoxyqueuosine (oQ-tRNA). The sequence is that of S-adenosylmethionine:tRNA ribosyltransferase-isomerase from Heliobacterium modesticaldum (strain ATCC 51547 / Ice1).